Here is a 203-residue protein sequence, read N- to C-terminus: Twist-related protein 1 (203 aa).

Residues 1-18 (MMQDVSSSPVSPADDSLS) show a composition bias toward low complexity. The segment at 1–107 (MMQDVSSSPV…GGSPQSCEEL (107 aa)) is disordered. The segment covering 34–43 (RGGRKRRSSR) has biased composition (basic residues). 2 stretches are compositionally biased toward gly residues: residues 46–65 (AGGG…GGDE) and 80–100 (GCGG…GGGS). Residues 109–160 (TQRVMANVRERQRTQSLNEPFAALRKIIPTLPSDKLSKIQTLKLAARYIDFL) enclose the bHLH domain. The tract at residues 162-192 (RVLQSDELDSKTASCSYVAHEWLSYAFSVWR) is sufficient for transactivation activity.

As to quaternary structure, efficient DNA binding requires dimerization with another bHLH protein. Homodimer or heterodimer with E proteins such as TCF3. ID1 binds preferentially to TCF3 but does not interact efficiently with TWIST1 so ID1 levels control the amount of TCF3 available to dimerize with TWIST and thus determine the type of dimer formed.

Its subcellular location is the nucleus. Functionally, acts as a transcriptional regulator. Inhibits myogenesis by sequestrating E proteins, inhibiting trans-activation by MEF2, and inhibiting DNA-binding by MYOD1 through physical interaction. This interaction probably involves the basic domains of both proteins. Also represses expression of pro-inflammatory cytokines such as TNFA and IL1B. Regulates cranial suture patterning and fusion. Activates transcription as a heterodimer with E proteins. Regulates gene expression differentially, depending on dimer composition. Homodimers induce expression of FGFR2 and POSTN while heterodimers repress FGFR2 and POSTN expression and induce THBS1 expression. Heterodimerization is also required for osteoblast differentiation. Represses the activity of the circadian transcriptional activator: NPAS2-BMAL1 heterodimer. This is Twist-related protein 1 (TWIST1) from Gorilla gorilla gorilla (Western lowland gorilla).